A 185-amino-acid chain; its full sequence is Ribosome-recycling factor (185 aa).

The protein belongs to the RRF family.

The protein localises to the cytoplasm. Its function is as follows. Responsible for the release of ribosomes from messenger RNA at the termination of protein biosynthesis. May increase the efficiency of translation by recycling ribosomes from one round of translation to another. The chain is Ribosome-recycling factor from Saccharopolyspora erythraea (strain ATCC 11635 / DSM 40517 / JCM 4748 / NBRC 13426 / NCIMB 8594 / NRRL 2338).